A 130-amino-acid chain; its full sequence is Glycoprotein hormone beta-5 (130 aa).

A signal peptide spans 1–24 (MKLVYLVLGAVALLLLGGPDSVLS). Cystine bridges form between Cys-36–Cys-84, Cys-50–Cys-99, Cys-60–Cys-115, Cys-64–Cys-117, and Cys-120–Cys-127. The N-linked (GlcNAc...) asparagine glycan is linked to Asn-87.

The protein belongs to the glycoprotein hormones subunit beta family. As to quaternary structure, heterodimer with GPHA2; this heterodimer interacts with thyroid-stimulating hormone receptor (TSHR), and hence stimulates cAMP production. Post-translationally, N-glycosylated. In terms of tissue distribution, expressed in the anterior lobe of pituitary.

It is found in the secreted. Functionally, functions as a heterodimeric glycoprotein hormone with GPHA2 able to bind and activate the thyroid-stimulating hormone receptor (TSHR), leading to increased cAMP production. Plays a central role in controlling thyroid cell metabolism. The sequence is that of Glycoprotein hormone beta-5 (Gphb5) from Mus musculus (Mouse).